The primary structure comprises 88 residues: uncharacterized protein (88 aa).

Helical transmembrane passes span Val-3–Ala-23, Val-33–Ala-53, and Phe-61–Phe-81.

It localises to the cell membrane. This is an uncharacterized protein from Bacillus subtilis (strain 168).